The following is a 263-amino-acid chain: Troponin T, fast skeletal muscle isoforms (263 aa).

Residues 1 to 26 (MSDTEEVEHGEEEYEEEAHEAEEVHE) are compositionally biased toward acidic residues. 3 disordered regions span residues 1-66 (MSDT…FDDI), 107-188 (RAER…VLAE), and 243-263 (DQAQ…GRWK). Ser-2 carries the post-translational modification N-acetylserine. 3 stretches are compositionally biased toward basic and acidic residues: residues 56 to 66 (PEGEKVDFDDI), 107 to 149 (RAER…DDLK), and 177 to 188 (TARETKKKVLAE). Residues 247–263 (KHSKKAGAKGKVGGRWK) are compositionally biased toward basic residues.

This sequence belongs to the troponin T family.

Functionally, troponin T is the tropomyosin-binding subunit of troponin, the thin filament regulatory complex which confers calcium-sensitivity to striated muscle actomyosin ATPase activity. The sequence is that of Troponin T, fast skeletal muscle isoforms (TNNT3) from Gallus gallus (Chicken).